The sequence spans 255 residues: tRNA (guanine-N(7)-)-methyltransferase (255 aa).

Positions 1 to 37 (MTAAASDPHNPRSSADDTASPRCESGQGSFFGRRKGH) are disordered. Positions 80, 105, 132, and 154 each coordinate S-adenosyl-L-methionine. Asp-154 is a catalytic residue. Residues Lys-158 and Asp-190 each contribute to the substrate site.

Belongs to the class I-like SAM-binding methyltransferase superfamily. TrmB family.

It carries out the reaction guanosine(46) in tRNA + S-adenosyl-L-methionine = N(7)-methylguanosine(46) in tRNA + S-adenosyl-L-homocysteine. Its pathway is tRNA modification; N(7)-methylguanine-tRNA biosynthesis. Catalyzes the formation of N(7)-methylguanine at position 46 (m7G46) in tRNA. This chain is tRNA (guanine-N(7)-)-methyltransferase, found in Nitrobacter hamburgensis (strain DSM 10229 / NCIMB 13809 / X14).